A 178-amino-acid chain; its full sequence is Peptidyl-prolyl cis-trans isomerase (178 aa).

A signal peptide spans 1-17; the sequence is MKLLFFFLVLAVSAAVA. Positions 26 to 177 constitute a PPIase cyclophilin-type domain; it reads FMDIEIDGES…KIAKITDIGL (152 aa).

Belongs to the cyclophilin-type PPIase family. PPIase A subfamily.

The enzyme catalyses [protein]-peptidylproline (omega=180) = [protein]-peptidylproline (omega=0). In terms of biological role, PPIases accelerate the folding of proteins. It catalyzes the cis-trans isomerization of proline imidic peptide bonds in oligopeptides. Up-regulates interferon gamma production by bovine T-cells. Stimulates high levels of IFN-gamma production by peripheral blood mononuclear cells and T-cells. The IFN-gamma-inducing effect is blocked by cyclosporin A (CsA). In Neospora caninum (Coccidian parasite), this protein is Peptidyl-prolyl cis-trans isomerase.